We begin with the raw amino-acid sequence, 179 residues long: Viral interleukin-10 homolog (179 aa).

The first 18 residues, 1 to 18 (MFRASLLCCLVLLAGVWA), serve as a signal peptide directing secretion. 2 disulfides stabilise this stretch: cysteine 30/cysteine 127 and cysteine 80/cysteine 133. N-linked (GlcNAc...) asparagine; by host glycans are attached at residues asparagine 100 and asparagine 135.

The protein belongs to the IL-10 family.

The protein resides in the secreted. Down-regulates the expression of the TAP1 gene (transporter associated with antigen processing), thereby affecting the transport of peptides into the endoplasmic reticulum and subsequent peptide loading by MHC class I molecules. In consequence, infected cells are masked for immune recognition by cytotoxic T-lymphocytes. The polypeptide is Viral interleukin-10 homolog (Equus caballus (Horse)).